The primary structure comprises 304 residues: N-acetyl-D-glucosamine kinase (304 aa).

Residues 4-11 (GFDMGGTK) and 133-140 (GVGGGLIV) each bind ATP. Zn(2+)-binding residues include histidine 157, cysteine 177, cysteine 179, and cysteine 184.

This sequence belongs to the ROK (NagC/XylR) family. NagK subfamily.

The enzyme catalyses N-acetyl-D-glucosamine + ATP = N-acetyl-D-glucosamine 6-phosphate + ADP + H(+). The protein operates within cell wall biogenesis; peptidoglycan recycling. In terms of biological role, catalyzes the phosphorylation of N-acetyl-D-glucosamine (GlcNAc) derived from cell-wall degradation, yielding GlcNAc-6-P. This chain is N-acetyl-D-glucosamine kinase, found in Yersinia pseudotuberculosis serotype O:1b (strain IP 31758).